A 358-amino-acid chain; its full sequence is Trace amine-associated receptor 7a (358 aa).

Residues 1–47 (MDKLVDNFLSGQSRTMSEDLLSASSPQLCYENLNGSCIRSPYSPGPR) lie on the Extracellular side of the membrane. An N-linked (GlcNAc...) asparagine glycan is attached at N34. 2 disulfides stabilise this stretch: C37–C201 and C120–C205. A helical transmembrane segment spans residues 48-68 (LILYAVFGFGAVLAVCGNLLV). Residues 69 to 83 (MTSILHFRQLHSPAN) are Cytoplasmic-facing. The chain crosses the membrane as a helical span at residues 84-104 (FLVASLACADFLVGLTVMPFS). At 105–121 (TVRSVEGCWYFGDTYCK) the chain is on the extracellular side. The helical transmembrane segment at 122–143 (FHSCFEGSFCYSSIFHLCFISV) threads the bilayer. Residues 144–166 (DRYIAVSDPLIYPTRFTASVSGK) lie on the Cytoplasmic side of the membrane. Residues 167–187 (CITFSWLLSIIYSFSLLYTGA) form a helical membrane-spanning segment. Topologically, residues 188-212 (NEAGLEDLVSALTCVGGCQIAVNQS) are extracellular. N-linked (GlcNAc...) asparagine glycosylation is present at N210. The helical transmembrane segment at 213 to 233 (WVFINFLLFLVPTLVMMTVYS) threads the bilayer. At 234–274 (KIFLIAKQQAQNIEKMSKQTTRASESYKDRVAKRERKAAKT) the chain is on the cytoplasmic side. The helical transmembrane segment at 275–295 (LGIAVAAFLLSWLPYFIDSII) threads the bilayer. Residues 296–309 (DAFLGFITPTYVYE) are Extracellular-facing. A helical transmembrane segment spans residues 310 to 333 (ILVWIAYYNSAMNPLIYAFFYPWF). Over 334-358 (RKAIKLIVTGKILRQNSSVTNLFPE) the chain is Cytoplasmic.

The protein belongs to the G-protein coupled receptor 1 family.

It localises to the cell membrane. In terms of biological role, olfactory receptor specific for N,N-dimethylalkylamines trace amines. Trace amine compounds are enriched in animal body fluids and act on trace amine-associated receptors (TAARs) to elicit both intraspecific and interspecific innate behaviors. Ligand-binding causes a conformation change that triggers signaling via G(s)-class of G alpha proteins (GNAL or GNAS). This is Trace amine-associated receptor 7a from Rattus norvegicus (Rat).